A 626-amino-acid chain; its full sequence is (+)-3-carene synthase 2, chloroplastic (626 aa).

The N-terminal 45 residues, 1 to 45 (MSLISAVPLASSCVSKSLISSVREHTALRRAIATLQMSRRGKSVA), are a transit peptide targeting the chloroplast. Mg(2+) is bound by residues D377, D381, and D529. The DDXXD motif signature appears at 377–381 (DDMYD).

Belongs to the terpene synthase family. Tpsd subfamily. Mg(2+) serves as cofactor. It depends on Mn(2+) as a cofactor.

The protein localises to the plastid. The protein resides in the chloroplast. The enzyme catalyses (2E)-geranyl diphosphate = (+)-car-3-ene + diphosphate. It participates in terpene metabolism; oleoresin biosynthesis. It functions in the pathway secondary metabolite biosynthesis; terpenoid biosynthesis. In terms of biological role, monoterpene synthase (TPS) involved in the biosynthesis of monoterpene natural products included in conifer oleoresin secretions and volatile emissions; these compounds contribute to biotic and abiotic stress defense against herbivores and pathogens. Catalyzes the conversion of (2E)-geranyl diphosphate (GPP) to (+)-3-carene. This Pinus banksiana (Jack pine) protein is (+)-3-carene synthase 2, chloroplastic.